The chain runs to 318 residues: UDP-3-O-acylglucosamine N-acyltransferase (318 aa).

The Proton acceptor role is filled by histidine 230.

Belongs to the transferase hexapeptide repeat family. LpxD subfamily. In terms of assembly, homotrimer.

The catalysed reaction is a UDP-3-O-[(3R)-3-hydroxyacyl]-alpha-D-glucosamine + a (3R)-hydroxyacyl-[ACP] = a UDP-2-N,3-O-bis[(3R)-3-hydroxyacyl]-alpha-D-glucosamine + holo-[ACP] + H(+). Its pathway is bacterial outer membrane biogenesis; LPS lipid A biosynthesis. Its function is as follows. Catalyzes the N-acylation of UDP-3-O-acylglucosamine using 3-hydroxyacyl-ACP as the acyl donor. Is involved in the biosynthesis of lipid A, a phosphorylated glycolipid that anchors the lipopolysaccharide to the outer membrane of the cell. This Wolinella succinogenes (strain ATCC 29543 / DSM 1740 / CCUG 13145 / JCM 31913 / LMG 7466 / NCTC 11488 / FDC 602W) (Vibrio succinogenes) protein is UDP-3-O-acylglucosamine N-acyltransferase.